The following is a 31-amino-acid chain: Photosystem II reaction center protein T (31 aa).

Met-1 is subject to N-formylmethionine. The chain crosses the membrane as a helical span at residues Ser-3–Phe-23.

This sequence belongs to the PsbT family. PSII is composed of 1 copy each of membrane proteins PsbA, PsbB, PsbC, PsbD, PsbE, PsbF, PsbH, PsbI, PsbJ, PsbK, PsbL, PsbM, PsbT, PsbX, PsbY, PsbZ, Psb30/Ycf12, peripheral proteins PsbO, CyanoQ (PsbQ), PsbU, PsbV and a large number of cofactors. It forms dimeric complexes.

Its subcellular location is the cellular thylakoid membrane. Functionally, found at the monomer-monomer interface of the photosystem II (PS II) dimer, plays a role in assembly and dimerization of PSII. PSII is a light-driven water plastoquinone oxidoreductase, using light energy to abstract electrons from H(2)O, generating a proton gradient subsequently used for ATP formation. This chain is Photosystem II reaction center protein T, found in Synechocystis sp. (strain ATCC 27184 / PCC 6803 / Kazusa).